A 400-amino-acid polypeptide reads, in one-letter code: Formate-dependent phosphoribosylglycinamide formyltransferase (400 aa).

N(1)-(5-phospho-beta-D-ribosyl)glycinamide contacts are provided by residues 22 to 23 and E82; that span reads EL. ATP is bound by residues R115, K156, 161–166, 196–199, and E204; these read SSGKGQ and EGFI. Residues 120–309 form the ATP-grasp domain; the sequence is RLAAETLGLP…EFALHARAIL (190 aa). Mg(2+)-binding residues include E268 and E280. N(1)-(5-phospho-beta-D-ribosyl)glycinamide contacts are provided by residues D287, K361, and 368–369; that span reads RR.

The protein belongs to the PurK/PurT family. As to quaternary structure, homodimer.

It carries out the reaction N(1)-(5-phospho-beta-D-ribosyl)glycinamide + formate + ATP = N(2)-formyl-N(1)-(5-phospho-beta-D-ribosyl)glycinamide + ADP + phosphate + H(+). It functions in the pathway purine metabolism; IMP biosynthesis via de novo pathway; N(2)-formyl-N(1)-(5-phospho-D-ribosyl)glycinamide from N(1)-(5-phospho-D-ribosyl)glycinamide (formate route): step 1/1. In terms of biological role, involved in the de novo purine biosynthesis. Catalyzes the transfer of formate to 5-phospho-ribosyl-glycinamide (GAR), producing 5-phospho-ribosyl-N-formylglycinamide (FGAR). Formate is provided by PurU via hydrolysis of 10-formyl-tetrahydrofolate. The chain is Formate-dependent phosphoribosylglycinamide formyltransferase from Xanthomonas oryzae pv. oryzae (strain PXO99A).